The sequence spans 294 residues: Cytidine deaminase (294 aa).

CMP/dCMP-type deaminase domains follow at residues 48-168 and 187-294; these read DDNT…FGPN and ETTD…YYTF. Residue 89 to 91 coordinates substrate; sequence NME. Histidine 102 contacts Zn(2+). Residue glutamate 104 is the Proton donor of the active site. Positions 129 and 132 each coordinate Zn(2+).

This sequence belongs to the cytidine and deoxycytidylate deaminase family. As to quaternary structure, homodimer. The cofactor is Zn(2+).

The catalysed reaction is cytidine + H2O + H(+) = uridine + NH4(+). It carries out the reaction 2'-deoxycytidine + H2O + H(+) = 2'-deoxyuridine + NH4(+). Functionally, this enzyme scavenges exogenous and endogenous cytidine and 2'-deoxycytidine for UMP synthesis. The chain is Cytidine deaminase from Photorhabdus laumondii subsp. laumondii (strain DSM 15139 / CIP 105565 / TT01) (Photorhabdus luminescens subsp. laumondii).